The sequence spans 62 residues: U-myrmeciitoxin(01)-Mg3a (62 aa).

The first 24 residues, 1–24, serve as a signal peptide directing secretion; sequence MKTTVILLLAIAIIFAIMTTLTSA.

As to expression, expressed by the venom gland.

It localises to the secreted. In terms of biological role, may have antimicrobial properties, like most ant linear peptides. This is U-myrmeciitoxin(01)-Mg3a from Myrmecia gulosa (Red bulldog ant).